We begin with the raw amino-acid sequence, 540 residues long: Glucose-6-phosphate isomerase (540 aa).

Glu-350 functions as the Proton donor in the catalytic mechanism. Catalysis depends on residues His-381 and Lys-503.

This sequence belongs to the GPI family.

It localises to the cytoplasm. It catalyses the reaction alpha-D-glucose 6-phosphate = beta-D-fructose 6-phosphate. It participates in carbohydrate biosynthesis; gluconeogenesis. The protein operates within carbohydrate degradation; glycolysis; D-glyceraldehyde 3-phosphate and glycerone phosphate from D-glucose: step 2/4. Functionally, catalyzes the reversible isomerization of glucose-6-phosphate to fructose-6-phosphate. This is Glucose-6-phosphate isomerase from Paraburkholderia xenovorans (strain LB400).